The following is a 236-amino-acid chain: uncharacterized protein (236 aa).

The region spanning 117 to 160 is the RPE1 insert domain; that stretch reads RYLSKQTDRNEFITTAESYIGISKHKSTNITYKLPLKEQFCNMS.

This is an uncharacterized protein from Rickettsia prowazekii (strain Madrid E).